Here is a 75-residue protein sequence, read N- to C-terminus: RNA-binding protein KhpA (75 aa).

The KH domain occupies 29–75; the sequence is KKVYEIVVNEEDVGQVIGKDGRTIKSLKILLSALMGDSKEITIKVVR.

It belongs to the KhpA RNA-binding protein family. Forms a complex with KhpB.

It is found in the cytoplasm. Functionally, a probable RNA chaperone. Forms a complex with KhpB which binds to cellular RNA and controls its expression. Plays a role in peptidoglycan (PG) homeostasis and cell length regulation. This is RNA-binding protein KhpA from Thermotoga maritima (strain ATCC 43589 / DSM 3109 / JCM 10099 / NBRC 100826 / MSB8).